The following is a 567-amino-acid chain: Wee1-like protein kinase 2 (567 aa).

2 stretches are compositionally biased toward basic and acidic residues: residues 1–12 and 26–36; these read MDDSSINKELKQ and EGQKEAPESRE. 2 disordered regions span residues 1 to 103 and 170 to 191; these read MDDS…DSRS and RSNGKRKTRGDLEEADPGEGKV. At Ser77 the chain carries Phosphoserine. The Nuclear localization signal signature appears at 174–176; the sequence is KRK. Residues 215 to 494 enclose the Protein kinase domain; sequence FLEVEKIGVG…ARSRVLRPSL (280 aa). ATP contacts are provided by residues 221-229 and Lys244; that span reads IGVGEFGTV. Residues 318-332 carry the Nuclear export signal motif; that stretch reads KLKDILLQISLGLKY. Asp342 serves as the catalytic Proton acceptor. Positions 347 and 384 each coordinate Mg(2+). Residues 497–523 adopt a coiled-coil conformation; the sequence is AEELQQQLNLEKSKTATLERELREAQQ. Residues 502–567 form a disordered region; the sequence is QQLNLEKSKT…SSFTCGKSSP (66 aa). Positions 507-520 are enriched in basic and acidic residues; the sequence is EKSKTATLERELRE. The segment covering 555–567 has biased composition (polar residues); it reads AKSSSFTCGKSSP.

This sequence belongs to the protein kinase superfamily. Ser/Thr protein kinase family. WEE1 subfamily. Phosphorylation leads to increase its activity.

It localises to the nucleus. It catalyses the reaction L-tyrosyl-[protein] + ATP = O-phospho-L-tyrosyl-[protein] + ADP + H(+). Its function is as follows. Oocyte-specific protein tyrosine kinase that phosphorylates and inhibits CDK1 and acts as a key regulator of meiosis during both prophase I and metaphase II. Required to maintain meiotic arrest in oocytes during the germinal vesicle (GV) stage, a long period of quiescence at dictyate prophase I, by phosphorylating CDK1 at 'Tyr-15', leading to inhibit CDK1 activity and prevent meiotic reentry. Also required for metaphase II exit during egg activation by phosphorylating CDK1 at 'Tyr-15', to ensure exit from meiosis in oocytes and promote pronuclear formation. This chain is Wee1-like protein kinase 2 (WEE2), found in Canis lupus familiaris (Dog).